The primary structure comprises 669 residues: PDF receptor (669 aa).

The Extracellular segment spans residues 1 to 244 (MTLLSNILDC…DIARRTRTLE (244 aa)). Residues 24-52 (RQSGSSGPSPSAPTAGTFESKSMLEPTSS) form a disordered region. The span at 26–40 (SGSSGPSPSAPTAGT) shows a compositional bias: low complexity. 6 N-linked (GlcNAc...) asparagine glycosylation sites follow: N111, N117, N130, N137, N148, and N198. A helical membrane pass occupies residues 245 to 265 (IVGLCLSLFALIVSLLIFCTF). Over 266-274 (RSLRNNRTK) the chain is Cytoplasmic. A helical transmembrane segment spans residues 275–295 (IHKNLFVAMVLQVIIRLTLYL). The Extracellular segment spans residues 296 to 334 (DQFRRGNKEAATNTSLSVIENTPYLCEASYVLLEYARTA). N308 carries an N-linked (GlcNAc...) asparagine glycan. A helical transmembrane segment spans residues 335-355 (MFMWMFIEGLYLHNMVTVAVF). The Cytoplasmic segment spans residues 356-366 (QGSFPLKFFSR). A helical membrane pass occupies residues 367–387 (LGWCVPILMTTVWARCTVMYM). At 388–411 (DTSLGECLWNYNLTPYYWILEGPR) the chain is on the extracellular side. Residues 412–432 (LAVILLNFCFLVNIIRVLVMK) traverse the membrane as a helical segment. The Cytoplasmic segment spans residues 433–449 (LRQSQASDIEQTRKAVR). A helical membrane pass occupies residues 450 to 470 (AAIVLLPLLGITNLLHQLAPL). Topologically, residues 471–480 (KTATNFAVWS) are extracellular. Residues 481–501 (YGTHFLTSFQGFFIALIYCFL) traverse the membrane as a helical segment. Residues 502–669 (NGEVRAVLLK…ESVVFELSEQ (168 aa)) are Cytoplasmic-facing. Disordered regions lie at residues 536-573 (AYNT…KPSS) and 590-614 (PRLQ…AEPD). Basic and acidic residues predominate over residues 595 to 609 (KAREKGKDRVEKTDA).

This sequence belongs to the G-protein coupled receptor 2 family. In terms of tissue distribution, mainly present in clock neurons of the brain. Localizes in all 4 s-LNv neurons, 1 LNd neuron, 7 DN1 neurons, and 1 DN3 neuron. In addition to the clock neurons, it is also present in approximately 13 pairs of neurons along the ventral nerve cord in third instar larvae, which do not overlap with dopaminergic or serotonergic neurons. Not present in DN2 neurons (at protein level).

The protein localises to the cell membrane. Functionally, receptor for PDF, a neuropeptide controlling circadian behavioral rhythms. Probably regulates circadian behavioral rhythms through coordination of activities of clock neurons. PDF-binding results in the elevation of cAMP synthesis. Plays a role in sleep regulation and regulates the state transition from sleep to wake. In Drosophila melanogaster (Fruit fly), this protein is PDF receptor.